A 249-amino-acid polypeptide reads, in one-letter code: Probable transcriptional regulatory protein Strop_1792 (249 aa).

Belongs to the TACO1 family.

The protein resides in the cytoplasm. The protein is Probable transcriptional regulatory protein Strop_1792 of Salinispora tropica (strain ATCC BAA-916 / DSM 44818 / JCM 13857 / NBRC 105044 / CNB-440).